The chain runs to 398 residues: ORC1-type DNA replication protein 1 (398 aa).

ATP contacts are provided by residues Thr67–Ala71, Tyr208, and Arg220.

Belongs to the CDC6/cdc18 family.

In terms of biological role, involved in regulation of DNA replication. This is ORC1-type DNA replication protein 1 (cdc6-1) from Sulfurisphaera tokodaii (strain DSM 16993 / JCM 10545 / NBRC 100140 / 7) (Sulfolobus tokodaii).